A 290-amino-acid chain; its full sequence is Arylamine N-acetyltransferase 2 (290 aa).

The active-site Acyl-thioester intermediate is the C68. CoA is bound by residues S103 and G104. 106–107 (IH) contributes to the substrate binding site. Catalysis depends on residues H107 and D122. Residue Y208 participates in CoA binding.

This sequence belongs to the arylamine N-acetyltransferase family.

It is found in the cytoplasm. The catalysed reaction is an arylamine + acetyl-CoA = an N-acetylarylamine + CoA. It catalyses the reaction an N-hydroxyarylamine + acetyl-CoA = an N-acetoxyarylamine + CoA. Catalyzes the N- or O-acetylation of various arylamine and heterocyclic amine substrates. Participates in the detoxification of a plethora of hydrazine and arylamine drugs. The polypeptide is Arylamine N-acetyltransferase 2 (Nat2) (Rattus norvegicus (Rat)).